A 545-amino-acid chain; its full sequence is Chaperonin GroEL (545 aa).

Residues 29 to 32, Lys50, 86 to 90, Gly414, 477 to 479, and Asp493 contribute to the ATP site; these read TMGP, DGTTT, and DAA.

Belongs to the chaperonin (HSP60) family. As to quaternary structure, forms a cylinder of 14 subunits composed of two heptameric rings stacked back-to-back. Interacts with the co-chaperonin GroES.

It is found in the cytoplasm. It carries out the reaction ATP + H2O + a folded polypeptide = ADP + phosphate + an unfolded polypeptide.. Functionally, together with its co-chaperonin GroES, plays an essential role in assisting protein folding. The GroEL-GroES system forms a nano-cage that allows encapsulation of the non-native substrate proteins and provides a physical environment optimized to promote and accelerate protein folding. This Campylobacter jejuni subsp. jejuni serotype O:2 (strain ATCC 700819 / NCTC 11168) protein is Chaperonin GroEL.